A 176-amino-acid chain; its full sequence is Large ribosomal subunit protein uL6 (176 aa).

Residues 156 to 170 (YKGKGVRYADEQVRR) are compositionally biased toward basic and acidic residues. Residues 156 to 176 (YKGKGVRYADEQVRRKEAKKK) are disordered.

The protein belongs to the universal ribosomal protein uL6 family. Part of the 50S ribosomal subunit.

Its function is as follows. This protein binds to the 23S rRNA, and is important in its secondary structure. It is located near the subunit interface in the base of the L7/L12 stalk, and near the tRNA binding site of the peptidyltransferase center. The sequence is that of Large ribosomal subunit protein uL6 from Shewanella woodyi (strain ATCC 51908 / MS32).